Reading from the N-terminus, the 273-residue chain is Putative phosphoenolpyruvate synthase regulatory protein (273 aa).

153-160 contributes to the ADP binding site; the sequence is AVSRAGKT.

It belongs to the pyruvate, phosphate/water dikinase regulatory protein family. PSRP subfamily.

It catalyses the reaction [pyruvate, water dikinase] + ADP = [pyruvate, water dikinase]-phosphate + AMP + H(+). It carries out the reaction [pyruvate, water dikinase]-phosphate + phosphate + H(+) = [pyruvate, water dikinase] + diphosphate. Bifunctional serine/threonine kinase and phosphorylase involved in the regulation of the phosphoenolpyruvate synthase (PEPS) by catalyzing its phosphorylation/dephosphorylation. The protein is Putative phosphoenolpyruvate synthase regulatory protein of Xylella fastidiosa (strain M12).